A 60-amino-acid chain; its full sequence is Short neurotoxin 1 (60 aa).

Disulfide bonds link C3–C22, C17–C39, C41–C52, and C53–C58.

The protein belongs to the three-finger toxin family. Short-chain subfamily. Type I alpha-neurotoxin sub-subfamily. In terms of tissue distribution, expressed by the venom gland.

It is found in the secreted. Its function is as follows. Binds to muscle nicotinic acetylcholine receptor (nAChR) and inhibit acetylcholine from binding to the receptor, thereby impairing neuromuscular transmission. The sequence is that of Short neurotoxin 1 from Hydrophis cyanocinctus (Asian annulated sea snake).